The sequence spans 213 residues: Glycerol-3-phosphate acyltransferase (213 aa).

6 helical membrane passes run 2 to 22 (ITIVLLILAYLLGSIPSGLWI), 54 to 74 (MATFVIDFFKGTLATLLPIMF), 80 to 100 (SPLIFGLLAVIGHTFPIFAGF), 110 to 130 (AGVVFGFAPVFCLYLAVVFFG), 143 to 163 (VTASIAAVIGVLLFPLFGFIL), and 165 to 185 (NYDPLFIAIILALASLIIIRH).

This sequence belongs to the PlsY family. In terms of assembly, probably interacts with PlsX.

The protein localises to the cell membrane. It carries out the reaction an acyl phosphate + sn-glycerol 3-phosphate = a 1-acyl-sn-glycero-3-phosphate + phosphate. The protein operates within lipid metabolism; phospholipid metabolism. Its function is as follows. Catalyzes the transfer of an acyl group from acyl-phosphate (acyl-PO(4)) to glycerol-3-phosphate (G3P) to form lysophosphatidic acid (LPA). This enzyme utilizes acyl-phosphate as fatty acyl donor, but not acyl-CoA or acyl-ACP. The sequence is that of Glycerol-3-phosphate acyltransferase from Streptococcus pneumoniae (strain Taiwan19F-14).